Reading from the N-terminus, the 605-residue chain is Tyrosyl-DNA phosphodiesterase 1 (605 aa).

The Nuclear localization signal signature appears at Arg-81–Pro-86. His-236 functions as the Nucleophile in the catalytic mechanism. Residue Lys-238 participates in substrate binding. Residues Ser-379–Ser-382 are interaction with DNA. Residue His-466 is the Proton donor/acceptor of the active site. Lys-468 lines the substrate pocket.

Belongs to the tyrosyl-DNA phosphodiesterase family. In terms of tissue distribution, ubiquitous, with a low level in roots.

The protein localises to the nucleus. Inhibited by vanadate analogs. In terms of biological role, DNA repair enzyme that can remove a variety of covalent adducts from DNA through hydrolysis of a 3'-phosphodiester bond, giving rise to DNA with a free 3' phosphate. Catalyzes the hydrolysis of dead-end complexes between DNA and the topoisomerase I active site tyrosine residue. This Arabidopsis thaliana (Mouse-ear cress) protein is Tyrosyl-DNA phosphodiesterase 1.